Here is a 152-residue protein sequence, read N- to C-terminus: 3-hydroxyacyl-[acyl-carrier-protein] dehydratase FabZ (152 aa).

Residue histidine 58 is part of the active site.

It belongs to the thioester dehydratase family. FabZ subfamily.

It is found in the cytoplasm. The enzyme catalyses a (3R)-hydroxyacyl-[ACP] = a (2E)-enoyl-[ACP] + H2O. Involved in unsaturated fatty acids biosynthesis. Catalyzes the dehydration of short chain beta-hydroxyacyl-ACPs and long chain saturated and unsaturated beta-hydroxyacyl-ACPs. The polypeptide is 3-hydroxyacyl-[acyl-carrier-protein] dehydratase FabZ (Prochlorococcus marinus (strain MIT 9312)).